Here is a 117-residue protein sequence, read N- to C-terminus: Large ribosomal subunit protein eL22 (117 aa).

S49 and S50 each carry phosphoserine.

The protein belongs to the eukaryotic ribosomal protein eL22 family. As to quaternary structure, component of the large ribosomal subunit (LSU). Mature yeast ribosomes consist of a small (40S) and a large (60S) subunit. The 40S small subunit contains 1 molecule of ribosomal RNA (18S rRNA) and at least 33 different proteins. The large 60S subunit contains 3 rRNA molecules (25S, 5.8S and 5S rRNA) and at least 46 different proteins.

It is found in the cytoplasm. The protein resides in the nucleus. The protein localises to the nucleolus. Component of the ribosome, a large ribonucleoprotein complex responsible for the synthesis of proteins in the cell. The small ribosomal subunit (SSU) binds messenger RNAs (mRNAs) and translates the encoded message by selecting cognate aminoacyl-transfer RNA (tRNA) molecules. The large subunit (LSU) contains the ribosomal catalytic site termed the peptidyl transferase center (PTC), which catalyzes the formation of peptide bonds, thereby polymerizing the amino acids delivered by tRNAs into a polypeptide chain. The nascent polypeptides leave the ribosome through a tunnel in the LSU and interact with protein factors that function in enzymatic processing, targeting, and the membrane insertion of nascent chains at the exit of the ribosomal tunnel. This Schizosaccharomyces pombe (strain 972 / ATCC 24843) (Fission yeast) protein is Large ribosomal subunit protein eL22 (rpl22).